Here is a 280-residue protein sequence, read N- to C-terminus: Putative pyruvate, phosphate dikinase regulatory protein (280 aa).

Residue 147–154 (GASRSSKT) coordinates ADP.

The protein belongs to the pyruvate, phosphate/water dikinase regulatory protein family. PDRP subfamily.

The enzyme catalyses N(tele)-phospho-L-histidyl/L-threonyl-[pyruvate, phosphate dikinase] + ADP = N(tele)-phospho-L-histidyl/O-phospho-L-threonyl-[pyruvate, phosphate dikinase] + AMP + H(+). It carries out the reaction N(tele)-phospho-L-histidyl/O-phospho-L-threonyl-[pyruvate, phosphate dikinase] + phosphate + H(+) = N(tele)-phospho-L-histidyl/L-threonyl-[pyruvate, phosphate dikinase] + diphosphate. Functionally, bifunctional serine/threonine kinase and phosphorylase involved in the regulation of the pyruvate, phosphate dikinase (PPDK) by catalyzing its phosphorylation/dephosphorylation. This chain is Putative pyruvate, phosphate dikinase regulatory protein, found in Pelobacter propionicus (strain DSM 2379 / NBRC 103807 / OttBd1).